A 169-amino-acid chain; its full sequence is Putative tRNA (cytidine(34)-2'-O)-methyltransferase (169 aa).

The S-adenosyl-L-methionine site is built by isoleucine 79, glycine 104, isoleucine 125, and serine 133.

Belongs to the class IV-like SAM-binding methyltransferase superfamily. RNA methyltransferase TrmH family. TrmL subfamily.

The protein resides in the cytoplasm. The enzyme catalyses cytidine(34) in tRNA + S-adenosyl-L-methionine = 2'-O-methylcytidine(34) in tRNA + S-adenosyl-L-homocysteine + H(+). It carries out the reaction 5-carboxymethylaminomethyluridine(34) in tRNA(Leu) + S-adenosyl-L-methionine = 5-carboxymethylaminomethyl-2'-O-methyluridine(34) in tRNA(Leu) + S-adenosyl-L-homocysteine + H(+). In terms of biological role, could methylate the ribose at the nucleotide 34 wobble position in tRNA. In Listeria innocua serovar 6a (strain ATCC BAA-680 / CLIP 11262), this protein is Putative tRNA (cytidine(34)-2'-O)-methyltransferase.